A 73-amino-acid polypeptide reads, in one-letter code: Large ribosomal subunit protein bL31 (73 aa).

This sequence belongs to the bacterial ribosomal protein bL31 family. Type A subfamily. In terms of assembly, part of the 50S ribosomal subunit.

Functionally, binds the 23S rRNA. This Jannaschia sp. (strain CCS1) protein is Large ribosomal subunit protein bL31 (rpmE).